Here is a 695-residue protein sequence, read N- to C-terminus: UvrABC system protein B (695 aa).

One can recognise a Helicase ATP-binding domain in the interval Lys-25–Ala-176. Gly-38–Thr-45 lines the ATP pocket. Positions Tyr-91–Ile-114 match the Beta-hairpin motif. One can recognise a Helicase C-terminal domain in the interval Leu-454 to Asn-617. The region spanning Pro-652 to Arg-687 is the UVR domain.

It belongs to the UvrB family. Forms a heterotetramer with UvrA during the search for lesions. Interacts with UvrC in an incision complex.

Its subcellular location is the cytoplasm. In terms of biological role, the UvrABC repair system catalyzes the recognition and processing of DNA lesions. A damage recognition complex composed of 2 UvrA and 2 UvrB subunits scans DNA for abnormalities. Upon binding of the UvrA(2)B(2) complex to a putative damaged site, the DNA wraps around one UvrB monomer. DNA wrap is dependent on ATP binding by UvrB and probably causes local melting of the DNA helix, facilitating insertion of UvrB beta-hairpin between the DNA strands. Then UvrB probes one DNA strand for the presence of a lesion. If a lesion is found the UvrA subunits dissociate and the UvrB-DNA preincision complex is formed. This complex is subsequently bound by UvrC and the second UvrB is released. If no lesion is found, the DNA wraps around the other UvrB subunit that will check the other stand for damage. This chain is UvrABC system protein B, found in Synechococcus sp. (strain JA-3-3Ab) (Cyanobacteria bacterium Yellowstone A-Prime).